The sequence spans 1443 residues: Lysophospholipase NTE1 (1443 aa).

Over 1–59 (MEEELAIEDLPRLTGTVSLNNGLLHSIYNETTVFKILRWSLVEIPKYILKLMSKNLEIN) the chain is Lumenal. Residues 60–80 (LNVSSILIITLLIAAGILVIV) traverse the membrane as a helical segment. Topologically, residues 81 to 1443 (RYKFLTGYSE…RIKMYRRNTM (1363 aa)) are cytoplasmic. Residues 103 to 118 (ALGQQSTNYPKSTSSG) show a composition bias toward polar residues. 2 disordered regions span residues 103–122 (ALGQ…LFVE) and 199–251 (KYDE…GKMH). The segment covering 210–235 (EGEEADEDDEEEEKEVGDDGDDEMDV) has biased composition (acidic residues). A nucleoside 3',5'-cyclic phosphate contacts are provided by residues 619–750 (LYKR…LKSL) and 746–871 (KLKS…VASK). The PNPLA domain occupies 1136–1300 (LVLGGGGSRG…LDNLPVMEMK (165 aa)). A GXGXXG motif is present at residues 1140–1145 (GGGSRG). The GXSXG motif lies at 1167–1171 (GTSIG). Catalysis depends on serine 1169, which acts as the Nucleophile. The active-site Proton acceptor is the aspartate 1287. Residues 1287 to 1289 (DGG) carry the DGA/G motif.

The protein belongs to the NTE family.

Its subcellular location is the endoplasmic reticulum membrane. The enzyme catalyses a 1-acyl-sn-glycero-3-phosphocholine + H2O = sn-glycerol 3-phosphocholine + a fatty acid + H(+). Its activity is regulated as follows. Inhibited by organophosphorus esters. Functionally, intracellular phospholipase B that catalyzes the double deacylation of phosphatidylcholine (PC) to glycerophosphocholine (GroPCho). Plays an important role in membrane lipid homeostasis. Responsible for the rapid PC turnover in response to inositol, elevated temperatures, or when choline is present in the growth medium. This Lodderomyces elongisporus (strain ATCC 11503 / CBS 2605 / JCM 1781 / NBRC 1676 / NRRL YB-4239) (Yeast) protein is Lysophospholipase NTE1 (NTE1).